The sequence spans 1295 residues: Phosphoribosylformylglycinamidine synthase (1295 aa).

Residues 305-327 are disordered; that stretch reads WPGAATGSGGEIRDEGATGRGAK. ATP-binding positions include 307–318, 386–388, and Ala-678; these read GAATGSGGEIRD and TGY. 4 residues coordinate Mg(2+): Asp-679, Glu-718, Asn-722, and Asp-884. Ser-886 contributes to the ATP binding site. The 254-residue stretch at 1042–1295 folds into the Glutamine amidotransferase type-1 domain; the sequence is VAVLREQGVN…IFRNARKQLG (254 aa). Cys-1135 functions as the Nucleophile in the catalytic mechanism. Residues His-1260 and Glu-1262 contribute to the active site.

The protein in the N-terminal section; belongs to the FGAMS family. Monomer.

It localises to the cytoplasm. It catalyses the reaction N(2)-formyl-N(1)-(5-phospho-beta-D-ribosyl)glycinamide + L-glutamine + ATP + H2O = 2-formamido-N(1)-(5-O-phospho-beta-D-ribosyl)acetamidine + L-glutamate + ADP + phosphate + H(+). The protein operates within purine metabolism; IMP biosynthesis via de novo pathway; 5-amino-1-(5-phospho-D-ribosyl)imidazole from N(2)-formyl-N(1)-(5-phospho-D-ribosyl)glycinamide: step 1/2. In terms of biological role, phosphoribosylformylglycinamidine synthase involved in the purines biosynthetic pathway. Catalyzes the ATP-dependent conversion of formylglycinamide ribonucleotide (FGAR) and glutamine to yield formylglycinamidine ribonucleotide (FGAM) and glutamate. In Salmonella typhimurium (strain LT2 / SGSC1412 / ATCC 700720), this protein is Phosphoribosylformylglycinamidine synthase.